The primary structure comprises 332 residues: uncharacterized protein (332 aa).

The tract at residues Glu-306–Phe-332 is disordered.

This is an uncharacterized protein from Homo sapiens (Human).